A 238-amino-acid polypeptide reads, in one-letter code: Cysteine-rich venom protein pseudechetoxin-like (238 aa).

An N-terminal signal peptide occupies residues 1–19; it reads MIAFIVLLSLAAVLQQSSG. Residues 20–28 constitute a propeptide that is removed on maturation; it reads TVDFASESS. In terms of domain architecture, SCP spans 38–164; the sequence is VDKHNDLRRS…STKYLYVCQY (127 aa). Disulfide bonds link cysteine 75-cysteine 153, cysteine 92-cysteine 165, cysteine 148-cysteine 162, cysteine 184-cysteine 191, cysteine 187-cysteine 196, cysteine 200-cysteine 233, cysteine 209-cysteine 227, and cysteine 218-cysteine 231. In terms of domain architecture, ShKT spans 200-233; it reads CKHNDDLSNCKPLAKKSKCQTEWIKSKCPATCFC.

The protein belongs to the CRISP family. In terms of tissue distribution, expressed by the venom gland.

Its subcellular location is the secreted. In terms of biological role, blocks olfactory (CNGA2) and retinal (CNGA1) CNG channel currents. Does not affect neither depolarization- nor caffeine-induced contraction of smooth muscle. The sequence is that of Cysteine-rich venom protein pseudechetoxin-like from Oxyuranus microlepidotus (Inland taipan).